We begin with the raw amino-acid sequence, 171 residues long: Ribosome maturation factor RimP (171 aa).

This sequence belongs to the RimP family.

It localises to the cytoplasm. Its function is as follows. Required for maturation of 30S ribosomal subunits. This Anaeromyxobacter sp. (strain K) protein is Ribosome maturation factor RimP.